The sequence spans 232 residues: Very-long-chain (3R)-3-hydroxyacyl-CoA dehydratase 4 (232 aa).

Topologically, residues 1–19 are cytoplasmic; the sequence is MGPLALPAWLQPRYRKNAY. The helical transmembrane segment at 20–40 threads the bilayer; that stretch reads LFIYYLIQFCGHSWIFTNMTV. Residues 41 to 56 are Lumenal-facing; that stretch reads RFFSFGKDSMVDTFYA. A helical membrane pass occupies residues 57 to 77; it reads IGLVMRLCQSVSLLELLHIYV. The Cytoplasmic portion of the chain corresponds to 78–112; sequence GIESNHLLPRFLQLTERIIILFVVITSQEEVQEKY. Residues 113–133 traverse the membrane as a helical segment; that stretch reads VVCVLFVFWNLLDMVRYTYSM. Over 134–135 the chain is Lumenal; it reads LS. The helical transmembrane segment at 136 to 156 threads the bilayer; it reads VIGISYAVLTWLSQTLWMPIY. Tyrosine 156 is an active-site residue. Proline 157 is a topological domain (cytoplasmic). A helical transmembrane segment spans residues 158-178; that stretch reads LCVLAEAFAIYQSLPYFESFG. Glutamate 163 is a catalytic residue. The Lumenal portion of the chain corresponds to 179 to 189; it reads TYSTKLPFDLS. A helical membrane pass occupies residues 190–210; the sequence is IYFPYVLKIYLMMLFIGMYFT. Residues 211-232 lie on the Cytoplasmic side of the membrane; it reads YSHLYSERRDILGIFPIKKKKM.

This sequence belongs to the very long-chain fatty acids dehydratase HACD family. May interact with enzymes of the ELO family (including ELOVL1); with those enzymes that mediate condensation, the first of the four steps of the reaction cycle responsible for fatty acids elongation, may be part of a larger fatty acids elongase complex. Highly expressed in leukocytes, and low expression in heart, spleen, kidney, and placenta.

It localises to the endoplasmic reticulum membrane. It carries out the reaction a very-long-chain (3R)-3-hydroxyacyl-CoA = a very-long-chain (2E)-enoyl-CoA + H2O. It catalyses the reaction (3R)-hydroxyhexadecanoyl-CoA = (2E)-hexadecenoyl-CoA + H2O. It functions in the pathway lipid metabolism; fatty acid biosynthesis. In terms of biological role, catalyzes the third of the four reactions of the long-chain fatty acids elongation cycle. This endoplasmic reticulum-bound enzymatic process, allows the addition of two carbons to the chain of long- and very long-chain fatty acids/VLCFAs per cycle. This enzyme catalyzes the dehydration of the 3-hydroxyacyl-CoA intermediate into trans-2,3-enoyl-CoA, within each cycle of fatty acid elongation. Thereby, it participates in the production of VLCFAs of different chain lengths that are involved in multiple biological processes as precursors of membrane lipids and lipid mediators. The chain is Very-long-chain (3R)-3-hydroxyacyl-CoA dehydratase 4 from Homo sapiens (Human).